An 873-amino-acid polypeptide reads, in one-letter code: F-BAR domain only protein 1 (873 aa).

The F-BAR domain maps to 1–248; sequence MSYFGEHFWG…NVENVTVDML (248 aa). A mediates membrane-binding region spans residues 1–275; that stretch reads MSYFGEHFWG…LDFDAYSSAA (275 aa). The interval 153 to 172 is disordered; that stretch reads RENTSQKEMDKAETKSKKAA. Residues 155–178 are a coiled coil; the sequence is NTSQKEMDKAETKSKKAADSLRRS. The tract at residues 267-439 is mediates interaction with the adaptor protein complex AP-2; it reads DFDAYSSAAL…KSLFGPPLES (173 aa). Phosphoserine occurs at positions 295, 343, and 368. The tract at residues 302-347 is disordered; it reads SVDFLESDSGVPPEVDDEGFTVRPDISQNNGAEPPRFSSSDSDFDD. Disordered regions lie at residues 381–600 and 813–833; these read GSLI…RGPS and SGHL…SPVA. The segment covering 447 to 466 has biased composition (low complexity); that stretch reads TGSSSLGFTSSPSPFSSSSP. A Phosphoserine modification is found at Ser518. Residues 567–576 show a composition bias toward low complexity; the sequence is SLSPSPLGSS. The interval 593 to 873 is mediates interaction with AGFG1, CALM, DAB2, EPS15, EPS15R, ITSN1 and clathrin; sequence HGISRGPSPV…FATGMYLVSC (281 aa). At Ser600 the chain carries Phosphoserine. An MHD domain is found at 609–872; that stretch reads ALPVATAFTE…RFATGMYLVS (264 aa). Residues 816 to 827 show a composition bias toward polar residues; that stretch reads LSASWQPQSGPS.

This sequence belongs to the FCHO family. In terms of assembly, may oligomerize and form homotetramer. Interacts with AP2A2 and AP2B1; 2 subunits of the adaptor protein complex AP-2. Interacts with DAB2. Interacts with clathrin (CLTC or CLTCL1). Interacts with EPS15, EPS15R and ITSN1. Interacts with AGFG1 and CALM. May interact with ACVR1; linking this receptor to clathrin-mediated endocytosis. In terms of tissue distribution, mainly detected in brain and spleen.

Its subcellular location is the membrane. It is found in the clathrin-coated pit. Functionally, functions in an early step of clathrin-mediated endocytosis. Has both a membrane binding/bending activity and the ability to recruit proteins essential to the formation of functional clathrin-coated pits. May regulate Bmp signaling by regulating clathrin-mediated endocytosis of Bmp receptors. Involved in the regulation of T-cell poliferation and activation. Affects TCR clustering upon receptor triggering and modulates its internalisation, playing a role in TCR-dependent T-cell activation. The chain is F-BAR domain only protein 1 from Mus musculus (Mouse).